We begin with the raw amino-acid sequence, 244 residues long: Cell division protein ZapD (244 aa).

Belongs to the ZapD family. In terms of assembly, interacts with FtsZ.

It localises to the cytoplasm. In terms of biological role, cell division factor that enhances FtsZ-ring assembly. Directly interacts with FtsZ and promotes bundling of FtsZ protofilaments, with a reduction in FtsZ GTPase activity. This is Cell division protein ZapD from Shewanella oneidensis (strain ATCC 700550 / JCM 31522 / CIP 106686 / LMG 19005 / NCIMB 14063 / MR-1).